The sequence spans 274 residues: Peroxiredoxin-4 (274 aa).

The signal sequence occupies residues 1–40 (MEAPPPPPPLPATTLAPGRSRKLLLLPLLLFLLRAEAVRG). Residues 82–240 (AKISKPAPYW…TLRLVQAFQY (159 aa)) form the Thioredoxin domain. The active-site Cysteine sulfenic acid (-SOH) intermediate is cysteine 127.

Belongs to the peroxiredoxin family. AhpC/Prx1 subfamily. In terms of assembly, homodimer; disulfide-linked, upon oxidation. 5 homodimers assemble to form a ring-like decamer. The enzyme can be inactivated by further oxidation of the cysteine sulfenic acid (C(P)-SOH) to sulphinic acid (C(P)-SO2H) and sulphonic acid (C(P)-SO3H) instead of its condensation to a disulfide bond.

It is found in the cytoplasm. The protein localises to the endoplasmic reticulum. The catalysed reaction is a hydroperoxide + [thioredoxin]-dithiol = an alcohol + [thioredoxin]-disulfide + H2O. Thiol-specific peroxidase that catalyzes the reduction of hydrogen peroxide and organic hydroperoxides to water and alcohols, respectively. Plays a role in cell protection against oxidative stress by detoxifying peroxides and as sensor of hydrogen peroxide-mediated signaling events. Regulates the activation of NF-kappa-B in the cytosol by a modulation of I-kappa-B-alpha phosphorylation. The sequence is that of Peroxiredoxin-4 (PRDX4) from Bos taurus (Bovine).